The chain runs to 113 residues: MHEMSIAISIIDAVAAKAEAEHADTVTIVELEVGKVAGVEVESLKFCFSAAAKNTVAEGAELAVCEVEPVGECEACGQRFPVAFHVATCTSCGSFKTNIVSGRELLIKSITIE.

His-2 contributes to the Ni(2+) binding site. Zn(2+) is bound by residues Cys-73, Cys-76, Cys-89, and Cys-92.

It belongs to the HypA/HybF family.

Involved in the maturation of [NiFe] hydrogenases. Required for nickel insertion into the metal center of the hydrogenase. This is Hydrogenase maturation factor HypA from Chlorobium phaeobacteroides (strain BS1).